Consider the following 66-residue polypeptide: MPKQKTHRASAKRFKRTANGGLKRHHAYTGHRFHGKTKKQRRHLRKAAMVSASDLKRIKQMLSQMR.

The disordered stretch occupies residues 1–42 (MPKQKTHRASAKRFKRTANGGLKRHHAYTGHRFHGKTKKQRR).

Belongs to the bacterial ribosomal protein bL35 family.

The sequence is that of Large ribosomal subunit protein bL35 from Lactobacillus gasseri (strain ATCC 33323 / DSM 20243 / BCRC 14619 / CIP 102991 / JCM 1131 / KCTC 3163 / NCIMB 11718 / NCTC 13722 / AM63).